The following is a 206-amino-acid chain: ATP-dependent Clp protease proteolytic subunit (206 aa).

The active-site Nucleophile is S107. H132 is an active-site residue.

Belongs to the peptidase S14 family. Fourteen ClpP subunits assemble into 2 heptameric rings which stack back to back to give a disk-like structure with a central cavity, resembling the structure of eukaryotic proteasomes.

It is found in the cytoplasm. It catalyses the reaction Hydrolysis of proteins to small peptides in the presence of ATP and magnesium. alpha-casein is the usual test substrate. In the absence of ATP, only oligopeptides shorter than five residues are hydrolyzed (such as succinyl-Leu-Tyr-|-NHMec, and Leu-Tyr-Leu-|-Tyr-Trp, in which cleavage of the -Tyr-|-Leu- and -Tyr-|-Trp bonds also occurs).. Cleaves peptides in various proteins in a process that requires ATP hydrolysis. Has a chymotrypsin-like activity. Plays a major role in the degradation of misfolded proteins. The sequence is that of ATP-dependent Clp protease proteolytic subunit from Idiomarina loihiensis (strain ATCC BAA-735 / DSM 15497 / L2-TR).